A 331-amino-acid chain; its full sequence is UPF0194 membrane protein YbhG (331 aa).

The first 19 residues, 1-19, serve as a signal peptide directing secretion; it reads MKKPVVIGLVIAAIVAVIA. Positions 140 to 209 form a coiled coil; it reads RTISANDLEN…DLQDTTLIAP (70 aa).

This sequence belongs to the UPF0194 family.

The protein resides in the periplasm. The sequence is that of UPF0194 membrane protein YbhG (ybhG) from Salmonella typhi.